We begin with the raw amino-acid sequence, 97 residues long: Large ribosomal subunit protein bL31 (97 aa).

The segment at K76 to L97 is disordered. The segment covering G83–L97 has biased composition (basic and acidic residues).

This sequence belongs to the bacterial ribosomal protein bL31 family. Type A subfamily. Part of the 50S ribosomal subunit.

In terms of biological role, binds the 23S rRNA. This chain is Large ribosomal subunit protein bL31, found in Mycoplasma pneumoniae (strain ATCC 29342 / M129 / Subtype 1) (Mycoplasmoides pneumoniae).